The primary structure comprises 396 residues: Phosphoglycerate kinase (396 aa).

Residues aspartate 21–asparagine 23, arginine 36, histidine 59–lysine 62, arginine 119, and arginine 156 contribute to the substrate site. ATP is bound by residues lysine 206, glycine 294, glutamate 325, and glycine 352–serine 355.

This sequence belongs to the phosphoglycerate kinase family. As to quaternary structure, monomer.

The protein localises to the cytoplasm. It catalyses the reaction (2R)-3-phosphoglycerate + ATP = (2R)-3-phospho-glyceroyl phosphate + ADP. It functions in the pathway carbohydrate degradation; glycolysis; pyruvate from D-glyceraldehyde 3-phosphate: step 2/5. The sequence is that of Phosphoglycerate kinase from Listeria monocytogenes serotype 4b (strain CLIP80459).